The chain runs to 741 residues: Catalase-peroxidase 2 (741 aa).

Positions 1–28 (MQKKRVGKSVVAALAIIAMSAGTVAAWA) are cleaved as a signal peptide. Residues 107-228 (WHGAGTYRTY…LAATQMGLIY (122 aa)) constitute a cross-link (tryptophyl-tyrosyl-methioninium (Trp-Tyr) (with M-254)). His108 acts as the Proton acceptor in catalysis. A cross-link (tryptophyl-tyrosyl-methioninium (Tyr-Met) (with W-107)) is located at residues 228–254 (YVNPEGPNGNPDPVAAAKDIRDAFGRM). His269 lines the heme b pocket.

The protein belongs to the peroxidase family. Peroxidase/catalase subfamily. In terms of assembly, homodimer or homotetramer. Requires heme b as cofactor. Post-translationally, formation of the three residue Trp-Tyr-Met cross-link is important for the catalase, but not the peroxidase activity of the enzyme.

The catalysed reaction is H2O2 + AH2 = A + 2 H2O. The enzyme catalyses 2 H2O2 = O2 + 2 H2O. Its function is as follows. Bifunctional enzyme with both catalase and broad-spectrum peroxidase activity. In Burkholderia ambifaria (strain ATCC BAA-244 / DSM 16087 / CCUG 44356 / LMG 19182 / AMMD) (Burkholderia cepacia (strain AMMD)), this protein is Catalase-peroxidase 2.